A 461-amino-acid polypeptide reads, in one-letter code: Fumarate hydratase class II (461 aa).

Substrate-binding positions include 97–99, 127–130, 137–139, and Thr185; these read SGT, HPND, and SSN. Residue His186 is the Proton donor/acceptor of the active site. The active site involves Ser316. Residues Ser317 and 322–324 each bind substrate; that span reads KVN.

Belongs to the class-II fumarase/aspartase family. Fumarase subfamily. In terms of assembly, homotetramer.

The protein resides in the cytoplasm. The enzyme catalyses (S)-malate = fumarate + H2O. The protein operates within carbohydrate metabolism; tricarboxylic acid cycle; (S)-malate from fumarate: step 1/1. Its function is as follows. Involved in the TCA cycle. Catalyzes the stereospecific interconversion of fumarate to L-malate. This Staphylococcus epidermidis (strain ATCC 35984 / DSM 28319 / BCRC 17069 / CCUG 31568 / BM 3577 / RP62A) protein is Fumarate hydratase class II.